Consider the following 117-residue polypeptide: MDKKSARIRRAARARHMMRENGVTRLVIHRTPRHIYAQVIAPNGSEVLAAASTVEKAISEQVKYTGNKDAAAVVGKLVAERALAKGIKDVAFDRSGFKYHGRVQSLADAAREAGLQF.

The protein belongs to the universal ribosomal protein uL18 family. As to quaternary structure, part of the 50S ribosomal subunit; part of the 5S rRNA/L5/L18/L25 subcomplex. Contacts the 5S and 23S rRNAs.

In terms of biological role, this is one of the proteins that bind and probably mediate the attachment of the 5S RNA into the large ribosomal subunit, where it forms part of the central protuberance. The sequence is that of Large ribosomal subunit protein uL18 from Mannheimia succiniciproducens (strain KCTC 0769BP / MBEL55E).